We begin with the raw amino-acid sequence, 245 residues long: NAD(P)H-hydrate epimerase (245 aa).

Residues 16-224 (AAALDAELMA…HIADKYDLEV (209 aa)) enclose the YjeF N-terminal domain. A (6S)-NADPHX-binding site is contributed by 68 to 72 (NNGGD). Positions 69 and 131 each coordinate K(+). Residues 135-141 (GFSFKPP) and Asp-164 contribute to the (6S)-NADPHX site. Residue Ser-167 participates in K(+) binding.

This sequence belongs to the NnrE/AIBP family. Requires K(+) as cofactor.

Its subcellular location is the cytoplasm. It localises to the mitochondrion. The catalysed reaction is (6R)-NADHX = (6S)-NADHX. The enzyme catalyses (6R)-NADPHX = (6S)-NADPHX. Functionally, catalyzes the epimerization of the S- and R-forms of NAD(P)HX, a damaged form of NAD(P)H that is a result of enzymatic or heat-dependent hydration. This is a prerequisite for the S-specific NAD(P)H-hydrate dehydratase to allow the repair of both epimers of NAD(P)HX. This chain is NAD(P)H-hydrate epimerase, found in Yarrowia lipolytica (strain CLIB 122 / E 150) (Yeast).